The chain runs to 289 residues: 4-hydroxy-tetrahydrodipicolinate synthase (289 aa).

A pyruvate-binding site is contributed by Thr43. Tyr131 functions as the Proton donor/acceptor in the catalytic mechanism. The active-site Schiff-base intermediate with substrate is the Lys160. Pyruvate is bound at residue Val200.

The protein belongs to the DapA family. Homotetramer; dimer of dimers.

The protein resides in the cytoplasm. It catalyses the reaction L-aspartate 4-semialdehyde + pyruvate = (2S,4S)-4-hydroxy-2,3,4,5-tetrahydrodipicolinate + H2O + H(+). It functions in the pathway amino-acid biosynthesis; L-lysine biosynthesis via DAP pathway; (S)-tetrahydrodipicolinate from L-aspartate: step 3/4. Functionally, catalyzes the condensation of (S)-aspartate-beta-semialdehyde [(S)-ASA] and pyruvate to 4-hydroxy-tetrahydrodipicolinate (HTPA). This chain is 4-hydroxy-tetrahydrodipicolinate synthase, found in Methanococcus maripaludis (strain C5 / ATCC BAA-1333).